The sequence spans 359 residues: Agropine synthesis conjugase (359 aa).

One can recognise an SIS domain in the interval 28–171; it reads TVAKFGRATA…IGGILNEREN (144 aa).

The sequence is that of Agropine synthesis conjugase (mas2) from Rhizobium rhizogenes (Agrobacterium rhizogenes).